The following is a 667-amino-acid chain: Protein angel homolog 1 (667 aa).

2 positions are modified to phosphoserine: Ser-77 and Ser-105.

This sequence belongs to the CCR4/nocturin family.

The protein is Protein angel homolog 1 of Rattus norvegicus (Rat).